Here is a 304-residue protein sequence, read N- to C-terminus: Acetaldehyde dehydrogenase (304 aa).

Residue cysteine 131 is the Acyl-thioester intermediate of the active site. NAD(+) is bound by residues 162–170 (SAGPGTRKN) and asparagine 273.

Belongs to the acetaldehyde dehydrogenase family.

The catalysed reaction is acetaldehyde + NAD(+) + CoA = acetyl-CoA + NADH + H(+). The chain is Acetaldehyde dehydrogenase from Polaromonas naphthalenivorans (strain CJ2).